Consider the following 485-residue polypeptide: Glutamyl-tRNA(Gln) amidotransferase subunit A (485 aa).

Active-site charge relay system residues include K79 and S154. S178 serves as the catalytic Acyl-ester intermediate.

Belongs to the amidase family. GatA subfamily. Heterotrimer of A, B and C subunits.

The enzyme catalyses L-glutamyl-tRNA(Gln) + L-glutamine + ATP + H2O = L-glutaminyl-tRNA(Gln) + L-glutamate + ADP + phosphate + H(+). In terms of biological role, allows the formation of correctly charged Gln-tRNA(Gln) through the transamidation of misacylated Glu-tRNA(Gln) in organisms which lack glutaminyl-tRNA synthetase. The reaction takes place in the presence of glutamine and ATP through an activated gamma-phospho-Glu-tRNA(Gln). The sequence is that of Glutamyl-tRNA(Gln) amidotransferase subunit A from Carboxydothermus hydrogenoformans (strain ATCC BAA-161 / DSM 6008 / Z-2901).